A 520-amino-acid polypeptide reads, in one-letter code: Bifunctional dihydrofolate reductase-thymidylate synthase (520 aa).

In terms of domain architecture, DHFR spans 26–229 (AFSIVVALDK…LEFEICKYVP (204 aa)). Valine 30 is a substrate binding site. NADP(+) is bound by residues alanine 32 and 38–44 (GIGDGES). Aspartate 52 serves as a coordination point for substrate. NADP(+) is bound by residues 81–83 (RKT), 102–105 (LSSK), and 157–164 (GGAQVYAD). Residues tyrosine 162 and threonine 180 each contribute to the substrate site. Residues 234 to 520 (ERQYLELIDR…HPPIKMEMAV (287 aa)) form a thymidylate synthase region. Arginine 254 is a dUMP binding site. The active site involves cysteine 400. DUMP contacts are provided by residues histidine 401, 421-425 (QRSCD), asparagine 433, and 463-465 (HVY).

This sequence in the N-terminal section; belongs to the dihydrofolate reductase family. In the C-terminal section; belongs to the thymidylate synthase family.

It carries out the reaction (6S)-5,6,7,8-tetrahydrofolate + NADP(+) = 7,8-dihydrofolate + NADPH + H(+). The catalysed reaction is dUMP + (6R)-5,10-methylene-5,6,7,8-tetrahydrofolate = 7,8-dihydrofolate + dTMP. Its pathway is cofactor biosynthesis; tetrahydrofolate biosynthesis; 5,6,7,8-tetrahydrofolate from 7,8-dihydrofolate: step 1/1. Bifunctional enzyme. Involved in de novo dTMP biosynthesis. Key enzyme in folate metabolism. Catalyzes an essential reaction for de novo glycine and purine synthesis, DNA precursor synthesis, and for the conversion of dUMP to dTMP. The polypeptide is Bifunctional dihydrofolate reductase-thymidylate synthase (Leishmania amazonensis).